The sequence spans 671 residues: NADH-quinone oxidoreductase subunit G (671 aa).

The 78-residue stretch at 1 to 78 folds into the 2Fe-2S ferredoxin-type domain; it reads MIKLNVDGSE…GMVIHTDTPM (78 aa). [2Fe-2S] cluster contacts are provided by cysteine 34, cysteine 45, cysteine 48, and cysteine 62. A 4Fe-4S His(Cys)3-ligated-type domain is found at 78–117; that stretch reads MVKKAREGVMEFLLINHPLDCPICDQGGECNLQDQAFRYG. [4Fe-4S] cluster is bound by residues histidine 94, cysteine 98, cysteine 101, cysteine 107, cysteine 146, cysteine 149, cysteine 152, and cysteine 196. Residues 215–271 form the 4Fe-4S Mo/W bis-MGD-type domain; the sequence is LKHTASIGVHDAEGSNIRIDSRGDEVMRILPRVNEEINEEWLSDKNRFSYDGLKYQR.

This sequence belongs to the complex I 75 kDa subunit family. It depends on [2Fe-2S] cluster as a cofactor. Requires [4Fe-4S] cluster as cofactor.

It catalyses the reaction a quinone + NADH + 5 H(+)(in) = a quinol + NAD(+) + 4 H(+)(out). Functionally, NDH-1 shuttles electrons from NADH, via FMN and iron-sulfur (Fe-S) centers, to quinones in the respiratory chain. Couples the redox reaction to proton translocation (for every two electrons transferred, four hydrogen ions are translocated across the cytoplasmic membrane), and thus conserves the redox energy in a proton gradient. The protein is NADH-quinone oxidoreductase subunit G (nuoG) of Rickettsia conorii (strain ATCC VR-613 / Malish 7).